We begin with the raw amino-acid sequence, 926 residues long: Isoleucine--tRNA ligase (926 aa).

Residues 1 to 21 (MKMKETLQLGKTAFPMRGNLP) are disordered. The 'HIGH' region signature appears at 57–67 (PYANGNIHLGH). Position 552 (Glu552) interacts with L-isoleucyl-5'-AMP. The 'KMSKS' region signature appears at 593–597 (KMSKS). Lys596 lines the ATP pocket. Residues Cys886, Cys889, Cys906, and Cys909 each contribute to the Zn(2+) site.

This sequence belongs to the class-I aminoacyl-tRNA synthetase family. IleS type 1 subfamily. As to quaternary structure, monomer. Requires Zn(2+) as cofactor.

It localises to the cytoplasm. It carries out the reaction tRNA(Ile) + L-isoleucine + ATP = L-isoleucyl-tRNA(Ile) + AMP + diphosphate. Catalyzes the attachment of isoleucine to tRNA(Ile). As IleRS can inadvertently accommodate and process structurally similar amino acids such as valine, to avoid such errors it has two additional distinct tRNA(Ile)-dependent editing activities. One activity is designated as 'pretransfer' editing and involves the hydrolysis of activated Val-AMP. The other activity is designated 'posttransfer' editing and involves deacylation of mischarged Val-tRNA(Ile). The sequence is that of Isoleucine--tRNA ligase from Enterococcus faecalis (strain ATCC 700802 / V583).